The primary structure comprises 271 residues: Formamidopyrimidine-DNA glycosylase (271 aa).

The Schiff-base intermediate with DNA role is filled by Pro2. Catalysis depends on Glu3, which acts as the Proton donor. Lys58 functions as the Proton donor; for beta-elimination activity in the catalytic mechanism. 3 residues coordinate DNA: His92, Arg111, and Arg152. The FPG-type zinc-finger motif lies at 237-271; it reads YVYGKVQKPCRICNNIITLIRQNGRSTYFCNACQN. The active-site Proton donor; for delta-elimination activity is Arg261.

It belongs to the FPG family. Monomer. It depends on Zn(2+) as a cofactor.

It catalyses the reaction Hydrolysis of DNA containing ring-opened 7-methylguanine residues, releasing 2,6-diamino-4-hydroxy-5-(N-methyl)formamidopyrimidine.. It carries out the reaction 2'-deoxyribonucleotide-(2'-deoxyribose 5'-phosphate)-2'-deoxyribonucleotide-DNA = a 3'-end 2'-deoxyribonucleotide-(2,3-dehydro-2,3-deoxyribose 5'-phosphate)-DNA + a 5'-end 5'-phospho-2'-deoxyribonucleoside-DNA + H(+). Involved in base excision repair of DNA damaged by oxidation or by mutagenic agents. Acts as a DNA glycosylase that recognizes and removes damaged bases. Has a preference for oxidized purines, such as 7,8-dihydro-8-oxoguanine (8-oxoG). Has AP (apurinic/apyrimidinic) lyase activity and introduces nicks in the DNA strand. Cleaves the DNA backbone by beta-delta elimination to generate a single-strand break at the site of the removed base with both 3'- and 5'-phosphates. This is Formamidopyrimidine-DNA glycosylase from Wolbachia pipientis subsp. Culex pipiens (strain wPip).